The chain runs to 373 residues: CASP-like protein UU6 (373 aa).

2 disordered regions span residues 1–100 (MGTL…GSEG) and 172–195 (TKET…PKKK). The Cytoplasmic portion of the chain corresponds to 1-204 (MGTLTDPTVD…KHRLRKHLTA (204 aa)). Positions 56 to 74 (KTNTGNAAESTASTENGET) are enriched in polar residues. The chain crosses the membrane as a helical span at residues 205–225 (IGAYSFAFRFSETVLSLIAIV). At 226 to 253 (VMCSTRGSMRTDGVDFGTLKFNHFQAYR) the chain is on the extracellular side. The chain crosses the membrane as a helical span at residues 254–274 (YLVAVNVIVFVYSTFQFIQLL). Residues 275-276 (YT) lie on the Cytoplasmic side of the membrane. Residues 277–297 (VILGISFIPSIFISTWMTFGF) traverse the membrane as a helical segment. Residues 298–342 (DQLFLYLLLSASTSAATVANMSYTGEMGIQLCSRFDVGSFCSKAD) are Extracellular-facing. N317 carries an N-linked (GlcNAc...) asparagine glycan. The chain crosses the membrane as a helical span at residues 343–363 (VAVTMSFFAVLAMLSSTILAI). Residues 364 to 373 (YRIAVLLREY) lie on the Cytoplasmic side of the membrane.

It belongs to the Casparian strip membrane proteins (CASP) family. Homodimer and heterodimers.

It is found in the cell membrane. This Physcomitrium patens (Spreading-leaved earth moss) protein is CASP-like protein UU6.